Here is an 815-residue protein sequence, read N- to C-terminus: Ferripyoverdine receptor (815 aa).

The signal sequence occupies residues 1 to 43 (MPAPHGLSPLSKAFLMRRAFQRRILPHSLAMALSLPLAGYVQA). The region spanning 161-271 (TPRETPQSIT…LGATINLIRK (111 aa)) is the TBDR plug domain. Residues 276-815 (EFKGHVELGA…NLMFSTRWDF (540 aa)) form the TBDR beta-barrel domain. The TonB C-terminal box motif lies at 798–815 (SASYGDPRNLMFSTRWDF).

It belongs to the TonB-dependent receptor family.

It is found in the cell outer membrane. Its function is as follows. Receptor for the siderophore ferripyoverdine. The chain is Ferripyoverdine receptor (fpvA) from Pseudomonas aeruginosa (strain ATCC 15692 / DSM 22644 / CIP 104116 / JCM 14847 / LMG 12228 / 1C / PRS 101 / PAO1).